The chain runs to 502 residues: Sporulation-specific protein 2 (502 aa).

A signal peptide spans 1 to 56; the sequence is MPIWKTQTFFTSISVIQIVNKETKVSTKKEKDSMLNQLNTILRFLFLFLQLIKSSA. Residues Asn77, Asn135, Asn285, Asn303, Asn340, Asn343, and Asn355 are each glycosylated (N-linked (GlcNAc...) asparagine). The interval 441–474 is disordered; it reads EGNVLGKQETDNDNGKKEKGKNGAKSQGSSKKME. Residues 448 to 461 are compositionally biased toward basic and acidic residues; the sequence is QETDNDNGKKEKGK. A lipid anchor (GPI-anchor amidated asparagine) is attached at Asn475. The propeptide at 476 to 502 is removed in mature form; sequence SAPKNIFIDAFKMSVYAVFTVLFSIIF.

It belongs to the SPS2 family.

The protein resides in the cell membrane. Its function is as follows. Involved in middle stages of meiosis. Redundant with SPS22 for the organization of the beta-glucan layer of the spore wall. The chain is Sporulation-specific protein 2 (SPS2) from Saccharomyces cerevisiae (strain ATCC 204508 / S288c) (Baker's yeast).